The primary structure comprises 491 residues: MELNDLQAQRAAKLAELRAAGLDPYPPRCYRSHTIAEALAAFDDLVAQSTTLTLTGRIIGARRIMGKIAFAHIEDGTGEIQLWLSRADLGDEWFERFRDQLDTFDIVQASGVLRCTKTGERSLFVRELAILAKAINPPPEKWAGLQDVEERHRQRYLDLIVNRDRREIFRARARVISTMRRVLDERGFLEVETPVLQPLYGGAAARPFITYHNALGQNLYLRIATELYLKRLIVGGFPGVYEIGKNFRNEGVDRSHNPEFTMMECYQAYADYHAMMTLVEEMLSEICLAVHGTTTITYQGRELDFRPPWPRIAMATAIADRTGIDITQITDLDALQEAISARGLRVERKASWAKQVDELFSEFVQPHLFQPTFIIDYPVAMSPLAKRIPDRPDFTERFEAFIAGMEIGNAFTELNDPFDQEERFREQLRAFAAGDEEAHQMDEDFINALRYGMPPTGGLGVGIDRLVMVLTDQSNIREVILFPHLRERSDE.

Mg(2+) contacts are provided by Glu-399 and Glu-406.

Belongs to the class-II aminoacyl-tRNA synthetase family. Homodimer. Requires Mg(2+) as cofactor.

It localises to the cytoplasm. It catalyses the reaction tRNA(Lys) + L-lysine + ATP = L-lysyl-tRNA(Lys) + AMP + diphosphate. The sequence is that of Lysine--tRNA ligase from Chloroflexus aurantiacus (strain ATCC 29366 / DSM 635 / J-10-fl).